The following is a 150-amino-acid chain: Transcriptional repressor NrdR (150 aa).

The segment at 3–33 (CPFCGGESRVLESRPASDEEAVRRRRECLAC) is a zinc-finger region. The region spanning 48 to 138 (LIVVKKDGRR…VYREFKDLNE (91 aa)) is the ATP-cone domain.

This sequence belongs to the NrdR family. It depends on Zn(2+) as a cofactor.

Functionally, negatively regulates transcription of bacterial ribonucleotide reductase nrd genes and operons by binding to NrdR-boxes. The polypeptide is Transcriptional repressor NrdR (Symbiobacterium thermophilum (strain DSM 24528 / JCM 14929 / IAM 14863 / T)).